We begin with the raw amino-acid sequence, 985 residues long: Bifunctional glutamine synthetase adenylyltransferase/adenylyl-removing enzyme (985 aa).

The segment at 1-472 is adenylyl removase; that stretch reads MTSSAPGNAD…HYARLFEGDP (472 aa). An adenylyl transferase region spans residues 477–985; that stretch reads SLPPVNYGAG…RRVFTSLLEE (509 aa).

The protein belongs to the GlnE family. Mg(2+) is required as a cofactor.

The enzyme catalyses [glutamine synthetase]-O(4)-(5'-adenylyl)-L-tyrosine + phosphate = [glutamine synthetase]-L-tyrosine + ADP. The catalysed reaction is [glutamine synthetase]-L-tyrosine + ATP = [glutamine synthetase]-O(4)-(5'-adenylyl)-L-tyrosine + diphosphate. Functionally, involved in the regulation of glutamine synthetase GlnA, a key enzyme in the process to assimilate ammonia. When cellular nitrogen levels are high, the C-terminal adenylyl transferase (AT) inactivates GlnA by covalent transfer of an adenylyl group from ATP to specific tyrosine residue of GlnA, thus reducing its activity. Conversely, when nitrogen levels are low, the N-terminal adenylyl removase (AR) activates GlnA by removing the adenylyl group by phosphorolysis, increasing its activity. The regulatory region of GlnE binds the signal transduction protein PII (GlnB) which indicates the nitrogen status of the cell. This Bradyrhizobium sp. (strain BTAi1 / ATCC BAA-1182) protein is Bifunctional glutamine synthetase adenylyltransferase/adenylyl-removing enzyme.